The primary structure comprises 333 residues: Receptor polysaccharide phosphotransferase WefC (333 aa).

It belongs to the stealth family.

Its function is as follows. Part of the type 2Gn receptor polysaccharide (RPS) biosynthesis locus. Essential for cell surface RPS production, and for synthesis of the host-like GalNAc beta 1-3Gal (Gn) motif of the RPS. Probably encodes a 1-3Gal alpha transferase. In Streptococcus gordonii, this protein is Receptor polysaccharide phosphotransferase WefC (wefC).